A 331-amino-acid polypeptide reads, in one-letter code: Isopenicillin N synthase (331 aa).

Arg-87, Tyr-91, Ser-183, and Tyr-189 together coordinate isopenicillin N. Residues Arg-87, Tyr-91, Ser-183, Tyr-189, His-214, and Asp-216 each contribute to the N-[(5S)-5-amino-5-carboxypentanoyl]-L-cysteinyl-D-valine site. Positions 176–288 (KKEDALSSVV…RQSLPFFVNL (113 aa)) constitute a Fe2OG dioxygenase domain. Fe(2+) contacts are provided by His-214, Asp-216, and His-270. Residue Arg-279 participates in 2-oxoglutarate binding. Ser-281 serves as a coordination point for isopenicillin N. An N-[(5S)-5-amino-5-carboxypentanoyl]-L-cysteinyl-D-valine-binding site is contributed by Ser-281.

It belongs to the iron/ascorbate-dependent oxidoreductase family. Monomer. Fe(2+) is required as a cofactor.

Its subcellular location is the cytoplasm. The protein resides in the cytosol. The enzyme catalyses N-[(5S)-5-amino-5-carboxypentanoyl]-L-cysteinyl-D-valine + O2 = isopenicillin N + 2 H2O. It participates in antibiotic biosynthesis; penicillin G biosynthesis; penicillin G from L-alpha-aminoadipate and L-cysteine and L-valine: step 2/3. Its function is as follows. Isopenicillin N synthase; part of the gene cluster that mediates the biosynthesis of penicillin, the world's most important antibiotic. IpnA catalyzes the cyclization of the tripeptide N-[(5S)-5-amino-5-carboxypentanoyl]-L-cysteinyl-D-valine (LLD-ACV or ACV) to form isopenicillin N (IPN) that contains the beta-lactam nucleus. The penicillin biosynthesis occurs via 3 enzymatic steps, the first corresponding to the production of the tripeptide N-[(5S)-5-amino-5-carboxypentanoyl]-L-cysteinyl-D-valine (LLD-ACV or ACV) by the NRPS acvA. The tripeptide ACV is then cyclized to isopenicillin N (IPN) by the isopenicillin N synthase ipnA that forms the beta-lactam nucleus. Finally, the alpha-aminoadipyl side chain is exchanged for phenylacetic acid by the isopenicillin N acyltransferase aatA to yield penicillin in the peroxisomal matrix. The chain is Isopenicillin N synthase from Penicillium chrysogenum (Penicillium notatum).